The following is a 414-amino-acid chain: Putative competence-damage inducible protein (414 aa).

It belongs to the CinA family.

The chain is Putative competence-damage inducible protein from Geobacillus kaustophilus (strain HTA426).